Consider the following 259-residue polypeptide: Ribonuclease PH (259 aa).

Phosphate contacts are provided by residues Arg88 and 126-128 (GTR).

Belongs to the RNase PH family. Homohexameric ring arranged as a trimer of dimers.

The enzyme catalyses tRNA(n+1) + phosphate = tRNA(n) + a ribonucleoside 5'-diphosphate. Functionally, phosphorolytic 3'-5' exoribonuclease that plays an important role in tRNA 3'-end maturation. Removes nucleotide residues following the 3'-CCA terminus of tRNAs; can also add nucleotides to the ends of RNA molecules by using nucleoside diphosphates as substrates, but this may not be physiologically important. Probably plays a role in initiation of 16S rRNA degradation (leading to ribosome degradation) during starvation. The sequence is that of Ribonuclease PH from Mycolicibacterium paratuberculosis (strain ATCC BAA-968 / K-10) (Mycobacterium paratuberculosis).